Consider the following 491-residue polypeptide: UDP-N-acetylmuramate--L-alanine ligase (491 aa).

Residue 126 to 132 (GTHGKTT) coordinates ATP.

Belongs to the MurCDEF family.

It is found in the cytoplasm. The catalysed reaction is UDP-N-acetyl-alpha-D-muramate + L-alanine + ATP = UDP-N-acetyl-alpha-D-muramoyl-L-alanine + ADP + phosphate + H(+). It participates in cell wall biogenesis; peptidoglycan biosynthesis. Its function is as follows. Cell wall formation. This is UDP-N-acetylmuramate--L-alanine ligase from Yersinia pestis (strain Pestoides F).